The following is a 76-amino-acid chain: Protein RALF-like 26 (76 aa).

An N-terminal signal peptide occupies residues 1–22; that stretch reads MKAWMIILLVICVAVVVEQSEA. Residues C37 and C46 are joined by a disulfide bond. N-linked (GlcNAc...) asparagine glycosylation is present at N61. C66 and C72 are joined by a disulfide.

This sequence belongs to the plant rapid alkalinization factor (RALF) family.

It localises to the secreted. In terms of biological role, cell signaling peptide that may regulate plant stress, growth, and development. Mediates a rapid alkalinization of extracellular space by mediating a transient increase in the cytoplasmic Ca(2+) concentration leading to a calcium-dependent signaling events through a cell surface receptor and a concomitant activation of some intracellular mitogen-activated protein kinases. The chain is Protein RALF-like 26 (RALFL26) from Arabidopsis thaliana (Mouse-ear cress).